The primary structure comprises 523 residues: Amino acid transporter protein 6 (523 aa).

The Cytoplasmic portion of the chain corresponds to 1–19 (MLNVFGVSASMPDDSRSQK). Residues 20–40 (MGLLGAISYIVGNIVGSGIFI) form a helical membrane-spanning segment. Residues 41–51 (TPTSIIENVNS) are Extracellular-facing. The helical transmembrane segment at 52–72 (VGLSLAIWILAAFISMLGSFC) threads the bilayer. The Cytoplasmic segment spans residues 73 to 86 (YVELGTSIRLSGGD). A helical membrane pass occupies residues 87 to 107 (FAYLCFMKWYPVAFAFMCIGC). The Extracellular segment spans residues 108–145 (TINYPATLAVQAQTFAEYVFRGAGVELDETSEFWAKKL). A helical transmembrane segment spans residues 146 to 166 (LGFSLIILLMFMNFFSLKTFV). The Cytoplasmic portion of the chain corresponds to 167 to 173 (QRFSILA). A helical transmembrane segment spans residues 174–194 (SLAKIAATLLIIITGFYYLIF). Residues 195-214 (KHWKQNLEEPFKGSNWNPGP) lie on the Extracellular side of the membrane. Residues 215–235 (FVNALFAGLFSYDGWDILNFG) form a helical membrane-spanning segment. Residues 236-249 (AEEIENPKRTMPLS) are Cytoplasmic-facing. Residues 250–270 (IIIGMTCIGVIYVAVNVAYSI) traverse the membrane as a helical segment. Topologically, residues 271 to 290 (VLSPTEMIASNAVAIDFANK) are extracellular. N289 carries N-linked (GlcNAc...) asparagine glycosylation. A helical membrane pass occupies residues 291–311 (TLGAAAFVVPVMVAILLIGSL). At 312–348 (NSTMFSASRYLQAVSRQGHIPSAISGIAPNCDSPRVA) the chain is on the cytoplasmic side. Residues 349 to 369 (LLVHILIAIAVSFLGDPDKLI) form a helical membrane-spanning segment. Topologically, residues 370–404 (NYVAFAQWSQRAFTMSALLYLRIRGRPRHPDRIQL) are extracellular. A helical transmembrane segment spans residues 405–425 (PIIMPILFFLVCTSMVVISII). Over 426–429 (DDFK) the chain is Cytoplasmic. The helical transmembrane segment at 430-450 (SSAVGLGILLGGLIIFIIFVW) threads the bilayer. At 451 to 523 (DRALPSSHTF…GNGQFKCTRM (73 aa)) the chain is on the extracellular side. N462 carries an N-linked (GlcNAc...) asparagine glycan. A PDZ-binding motif motif is present at residues 521–523 (TRM).

Belongs to the amino acid-polyamine-organocation (APC) superfamily. Interacts (via PDZ-binding motif) with nfrl-1 (via PDZ 2 domain); the interaction with nrfl-1 is required to sequester aat-6 to the apical cell membrane of intestinal cells. As to expression, expressed at the apical cell membrane of intestinal cells.

It localises to the apical cell membrane. In terms of biological role, amino acid transporter that mediates the uptake of the L-enantiomers of various amino acids, including L-glutamate. May play a role in promoting fertility. The polypeptide is Amino acid transporter protein 6 (Caenorhabditis elegans).